We begin with the raw amino-acid sequence, 109 residues long: Movement protein (109 aa).

The interval 1-28 is disordered; the sequence is MDSFGRAPPLWPQSALPRVPGAAPSSSG. Residues 34–54 traverse the membrane as a helical segment; sequence VGEIAIFTFVAVLALYLLWSW.

This sequence belongs to the mastrevirus movement protein family. As to quaternary structure, interacts with the capsid protein (CP). Part of a MP-CP-viral DNA complex.

The protein resides in the host membrane. Its function is as follows. Involved in the viral transport within, and between cells. In Sugarcane streak virus (isolate South Africa) (SSV), this protein is Movement protein.